The following is a 190-amino-acid chain: Large ribosomal subunit protein bL25 (190 aa).

This sequence belongs to the bacterial ribosomal protein bL25 family. CTC subfamily. As to quaternary structure, part of the 50S ribosomal subunit; part of the 5S rRNA/L5/L18/L25 subcomplex. Contacts the 5S rRNA. Binds to the 5S rRNA independently of L5 and L18.

In terms of biological role, this is one of the proteins that binds to the 5S RNA in the ribosome where it forms part of the central protuberance. The sequence is that of Large ribosomal subunit protein bL25 from Neisseria meningitidis serogroup A / serotype 4A (strain DSM 15465 / Z2491).